Here is a 3019-residue protein sequence, read N- to C-terminus: Genome polyprotein (3019 aa).

The residue at position 2 (Ser-2) is an N-acetylserine; by host. An interaction with STAT1 region spans residues 2–23 (STLPKPQRKTKRNTNRRPMDVK). Positions 2–58 (STLPKPQRKTKRNTNRRPMDVKFPGGGQIVGGVYLLPRRGPRLGVRATRKTSERSQP) are interaction with EIF2AK2/PKR. An interaction with DDX3X region spans residues 2–59 (STLPKPQRKTKRNTNRRPMDVKFPGGGQIVGGVYLLPRRGPRLGVRATRKTSERSQPR). The interval 2-75 (STLPKPQRKT…PKARQPQGRH (74 aa)) is disordered. Topologically, residues 2–168 (STLPKPQRKT…EDGINYATGN (167 aa)) are cytoplasmic. 2 consecutive short sequence motifs (nuclear localization signal) follow at residues 5–13 (PKPQRKTKR) and 38–43 (PRRGPR). Positions 7-16 (PQRKTKRNTN) are enriched in basic residues. A compositionally biased stretch (low complexity) spans 32–47 (GGVYLLPRRGPRLGVR). A Phosphoserine; by host modification is found at Ser-53. Short sequence motifs (nuclear localization signal) lie at residues 58 to 64 (PRGRRQP) and 66 to 71 (PKARQP). Phosphoserine; by host is present on Ser-99. The important for endoplasmic reticulum and mitochondrial localization stretch occupies residues 112 to 152 (PRRRSRNLGKVIDTLTCGFADLMGYIPVVGAPLGGVAAALA). Position 116 is a phosphoserine; by host PKA (Ser-116). Positions 122 to 173 (VIDTLTCGFADLMGYIPVVGAPLGGVAAALAHGVRAIEDGINYATGNLPGCS) are interaction with APOA2. Residues 164-167 (YATG) form an important for lipid droplets localization region. A helical membrane pass occupies residues 169 to 189 (LPGCSFSIFLLALLSCLTTPA). Positions 178–191 (LLALLSCLTTPASA) are cleaved as a propeptide — ER anchor for the core protein, removed in mature form by host signal peptidase. Residues 190–358 (SALTYGNSSG…FGGHWGILLA (169 aa)) lie on the Lumenal side of the membrane. 4 N-linked (GlcNAc...) asparagine; by host glycosylation sites follow: Asn-196, Asn-209, Asn-234, and Asn-250. The segment at 265–296 (LAGAAVVCSSLYIGDLCGSLFLAGQLFTFQPR) is important for fusion. Asn-305 carries an N-linked (GlcNAc...) asparagine; by host glycan. A helical membrane pass occupies residues 359-379 (VAYFGMAGNWLKVLAVLFLFA). At 380-730 (GVEATTTVGH…WEYIVLMFLV (351 aa)) the chain is on the lumenal side. Residues 385–411 (TTVGHGVARTTAGITGLFSPGASQNLQ) are HVR1. Residue Asn-415 is glycosylated (N-linked (GlcNAc...) asparagine; by host). 2 N-linked (GlcNAc...) (high mannose) asparagine; by host glycosylation sites follow: Asn-422 and Asn-429. Intrachain disulfides connect Cys-428/Cys-553, Cys-451/Cys-458, Cys-487/Cys-495, and Cys-504/Cys-509. An N-linked (GlcNAc...) asparagine; by host glycan is attached at Asn-447. Residues 474 to 479 (KVNISG) form an HVR2 region. N-linked (GlcNAc...) asparagine; by host glycosylation occurs at Asn-476. The segment at 481 to 494 (SDDRPYCWHYAPRP) is CD81-binding 1. N-linked (GlcNAc...) asparagine; by host glycosylation is present at Asn-533. The interval 545-552 (PPTGGWFG) is CD81-binding 2. The N-linked (GlcNAc...) asparagine; by host glycan is linked to Asn-557. Cys-565 and Cys-570 are joined by a disulfide. N-linked (GlcNAc...) asparagine; by host glycosylation is present at Asn-578. 3 disulfide bridges follow: Cys-586-Cys-590, Cys-602-Cys-625, and Cys-612-Cys-649. Residues Asn-628 and Asn-650 are each glycosylated (N-linked (GlcNAc...) (high mannose) asparagine; by host). A disulfide bond links Cys-657 and Cys-682. Residues 665 to 676 (IEMSPLLFSTTQ) form a PKR/eIF2-alpha phosphorylation homology domain (PePHD) region. Residues 731-751 (LADARICTCLWLMLLISNVEA) form a helical membrane-spanning segment. At 752-762 (AVERLVVLNAA) the chain is on the lumenal side. A helical membrane pass occupies residues 763 to 783 (SAAGTAGWWWAVLFLCCVWYV). Residues 784-786 (KGR) lie on the Cytoplasmic side of the membrane. Residues 787 to 808 (LVPACTYMALGMWPLLLTILAL) form a helical membrane-spanning segment. Topologically, residues 809-818 (PHRAYAMDNE) are lumenal. A helical membrane pass occupies residues 819 to 839 (QAASLGAVGLLAITIFTITPT). Residues 840–843 (YKKL) lie on the Cytoplasmic side of the membrane. Residues 844–863 (LTCFIWWNQYFLARAEAMVH) traverse the membrane as a helical segment. Residues 864–886 (EWVPDLRVRGGRDSIILLTCLLH) lie on the Lumenal side of the membrane. A helical transmembrane segment spans residues 887–907 (PQLGFEVTKILLAILAPLYIL). The region spanning 908 to 1031 (QYSLLKVPYF…DMQRGGWKLL (124 aa)) is the Peptidase C18 domain. Residues 908-1662 (QYSLLKVPYF…CMSADLEVIT (755 aa)) are Cytoplasmic-facing. The tract at residues 909 to 1211 (YSLLKVPYFV…PVENMETTMR (303 aa)) is protease NS2-3. The S-palmitoyl cysteine; by host moiety is linked to residue Cys-927. Residues 934 to 954 (AGGRYVQACLLRLGAWTGTFI) are interaction with host SCPS1. Active-site for protease NS2 activity; shared with dimeric partner residues include His-957, Glu-977, and Cys-998. The Peptidase S29 domain maps to 1032 to 1213 (APITAYAQQT…ENMETTMRSP (182 aa)). Active-site charge relay system; for serine protease NS3 activity residues include His-1088 and Asp-1112. 2 residues coordinate Zn(2+): Cys-1128 and Cys-1130. Residue Ser-1170 is the Charge relay system; for serine protease NS3 activity of the active site. Residues Cys-1176 and His-1180 each coordinate Zn(2+). One can recognise a Helicase ATP-binding domain in the interval 1222-1374 (PAVPQTYQVG…PNITETALPT (153 aa)). ATP is bound at residue 1235–1242 (APTGSGKS). Residues Ser-1242 and Glu-1322 each contribute to the Mg(2+) site. Residues 1321 to 1324 (DECH) carry the DECH box motif. The interval 1491 to 1503 (QRRGRTGRGKPGV) is RNA-binding. The chain crosses the membrane as a helical span at residues 1663–1683 (STWVLVGGVLAALAAYCLSVG). Residues 1684-1695 (CVVICGRITLTG) are NS3-binding. Topologically, residues 1684–1810 (CVVICGRITL…SLTSPLRTSQ (127 aa)) are cytoplasmic. The helical transmembrane segment at 1811–1829 (TLLLNILGGWIAAQVAPPP) threads the bilayer. Residues 1830-1833 (ASTA) are Lumenal-facing. Residues 1834 to 1854 (FVVSGLAGAAVGSIRLGRVLV) form a helical membrane-spanning segment. Position 1855 (Asp-1855) is a topological domain, cytoplasmic. Residues 1856 to 1876 (VLAGYGAGVSGALVAFKIMSG) traverse the membrane as a helical segment. The Lumenal portion of the chain corresponds to 1877-1886 (DCPTTEDMVN). Residues 1887–1907 (LLPALLSPGALVVGVVCAAIL) form a helical membrane-spanning segment. Residues 1908 to 1977 (RRHVGPAEGA…WVNEDTATPC (70 aa)) lie on the Cytoplasmic side of the membrane. Residue Cys-1977 is the site of S-palmitoyl cysteine; by host attachment. Residues 1978–2007 (ATSWLRDVWDWVCTVLSDFKVWLQAKLFPR) lie within the membrane without spanning it. Residues 2008–2998 (LPGIPFLSCQ…YHSVSQARPR (991 aa)) lie on the Cytoplasmic side of the membrane. Zn(2+) is bound by residues Cys-2016, Cys-2034, Cys-2036, and Cys-2057. The tract at residues 2125–2213 (EFFTEVDGVR…ASSSASQLSA (89 aa)) is FKBP8-binding. The segment at 2125-2338 (EFFTEVDGVR…PIPPPRRKRL (214 aa)) is transcriptional activation. The interaction with non-structural protein 4A stretch occupies residues 2140–2144 (PPCKP). The tract at residues 2189-2223 (ETASRRLKRGSPPSLASSSASQLSAPSLKATCTTS) is disordered. Residues 2194–2446 (RLKRGSPPSL…ALITPCAAEE (253 aa)) are interaction with host SKP2. Position 2199 is a phosphoserine; by host; in p56 (Ser-2199). The span at 2199–2216 (SPPSLASSSASQLSAPSL) shows a compositional bias: low complexity. Phosphoserine; by host; in p58 is present on residues Ser-2202, Ser-2206, Ser-2209, Ser-2212, and Ser-2215. The interval 2215–2254 (SLKATCTTSKDHPDMELIEANLLWRQEMGGNITRVESENK) is ISDR. Residues 2215–2280 (SLKATCTTSK…REISVSAECH (66 aa)) form an interaction with EIF2AK2/PKR region. The tract at residues 2254–2312 (KVVVLDSFEPLTAEYDEREISVSAECHRPPRHKFPPALPIWARPDYNPPLLQAWQMPGY) is NS4B-binding. The tract at residues 2305–2383 (QAWQMPGYEP…SITSPDPPAP (79 aa)) is V3. Positions 2328–2331 (APIP) match the SH3-binding motif. The Nuclear localization signal signature appears at 2333-2341 (PRRKRLVHL). Residue Lys-2356 forms a Glycyl lysine isopeptide (Lys-Gly) (interchain with G-Cter in ubiquitin) linkage. The tract at residues 2359 to 2418 (VEGSSDPGPSSDSGLSITSPDPPAPTTPDDACSEAESYSSMPPLEGEPGDPDLSSGSWST) is disordered. Residues 2361-2372 (GSSDPGPSSDSG) are compositionally biased toward low complexity. Phosphoserine; by host occurs at positions 2457 and 2470. One can recognise a RdRp catalytic domain in the interval 2642 to 2760 (PMGFSYDTRC…ICESAGVQED (119 aa)). Residues Asp-2648, Asp-2746, and Asp-2747 each contribute to the Mg(2+) site. A helical membrane pass occupies residues 2999–3019 (LLLLGLLLLTVGVGIFLVPAR).

This sequence belongs to the hepacivirus polyprotein family. As to quaternary structure, homooligomer. Interacts with E1 (via C-terminus). Interacts with the non-structural protein 5A. Interacts (via N-terminus) with host STAT1 (via SH2 domain); this interaction results in decreased STAT1 phosphorylation and ubiquitin-mediated proteasome-dependent STAT1 degradation, leading to decreased IFN-stimulated gene transcription. Interacts with host STAT3; this interaction constitutively activates STAT3. Interacts with host LTBR receptor. Interacts with host TNFRSF1A receptor and possibly induces apoptosis. Interacts with host HNRPK. Interacts with host YWHAE. Interacts with host UBE3A/E6AP. Interacts with host DDX3X. Interacts with host APOA2. Interacts with host RXRA protein. Interacts with host SP110 isoform 3/Sp110b; this interaction sequesters the transcriptional corepressor SP110 away from the nucleus. Interacts with host CREB3 nuclear transcription protein; this interaction triggers cell transformation. Interacts with host ACY3. Interacts with host C1QR1. Interacts with host RBM24; this interaction, which enhances the interaction of the mature core protein with 5'-UTR, may inhibit viral translation and favor replication. Interacts with host EIF2AK2/PKR; this interaction induces the autophosphorylation of EIF2AK2. Part of the viral assembly initiation complex composed of NS2, E1, E2, NS3, NS4A, NS5A and the mature core protein. Forms a heterodimer with envelope glycoprotein E2. Interacts with mature core protein. Interacts with protease NS2. The heterodimer E1/E2 interacts with host CLDN1; this interaction plays a role in viral entry into host cell. Interacts with host SPSB2 (via C-terminus). Part of the viral assembly initiation complex composed of NS2, E1, E2, NS3, NS4A, NS5A and the mature core protein. Interacts with host NEURL3; this interaction prevents E1 binding to glycoprotein E2. In terms of assembly, forms a heterodimer with envelope glycoprotein E1. Interacts with host CD81 and SCARB1 receptors; these interactions play a role in viral entry into host cell. Interacts with host EIF2AK2/PKR; this interaction inhibits EIF2AK2 and probably allows the virus to evade the innate immune response. Interacts with host CD209/DC-SIGN and CLEC4M/DC-SIGNR. Interact with host SPCS1; this interaction is essential for viral particle assembly. Interacts with protease NS2. The heterodimer E1/E2 interacts with host CLDN1; this interaction plays a role in viral entry into host cell. Part of the viral assembly initiation complex composed of NS2, E1, E2, NS3, NS4A, NS5A and the mature core protein. Interacts with host SLC3A2/4F2hc; the interaction may facilitate viral entry into host cell. Interacts with human PLSCR1. As to quaternary structure, homohexamer. Homoheptamer. Interacts with protease NS2. Homodimer. Interacts with host SPCS1; this interaction is essential for viral particle assembly. Interacts with envelope glycoprotein E1. Interacts with envelope glycoprotein E2. Interacts with viroporin p7. Interacts with serine protease/helicase NS3. Part of the replication complex composed of NS2, NS3, NS4A, NS4B, NS5A and the RNA-directed RNA polymerase embedded in an ER-derived membranous web. Part of the viral assembly initiation complex composed of NS2, E1, E2, NS3, NS4A, NS5A and the mature core protein. In terms of assembly, interacts with protease NS2. Interacts with non-structural protein 4A; this interaction stabilizes the folding of NS3 serine protease. NS3-NS4A interaction is essential for NS3 activation and allows membrane anchorage of the latter. NS3/NS4A complex also prevents phosphorylation of host IRF3, thus preventing the establishment of dsRNA induced antiviral state. Interacts with host MAVS; this interaction leads to the cleavage and inhibition of host MAVS. Interacts with host TICAM1; this interaction leads to the cleavage and inhibition of host TICAM1. Interacts with host TANK-binding kinase/TBK1; this interaction results in the inhibition of the association between TBK1 and IRF3, which leads to the inhibition of IRF3 activation. Interacts with host RBM24. Part of the replication complex composed of NS2, NS3, NS4A, NS4B, NS5A and the RNA-directed RNA polymerase embedded in an ER-derived membranous web. Part of the viral assembly initiation complex composed of NS2, E1, E2, NS3, NS4A, NS5A and the mature core protein. As to quaternary structure, interacts with NS3 serine protease; this interaction stabilizes the folding of NS3 serine protease. NS3-NS4A interaction is essential for NS3 activation and allows membrane anchorage of the latter. Interacts with non-structural protein 5A (via N-terminus). Part of the replication complex composed of NS2, NS3, NS4A, NS4B, NS5A and the RNA-directed RNA polymerase embedded in an ER-derived membranous web. Part of the viral assembly initiation complex composed of NS2, E1, E2, NS3, NS4A, NS5A and the mature core protein. Homomultimer. Interacts with non-structural protein NS5A. Interacts with host PLA2G4C; this interaction likely initiates the recruitment of replication complexes to lipid droplets. Interacts with host STING; this interaction disrupts the interaction between STING and TBK1 thereby suppressing the interferon signaling. Part of the replication complex composed of NS2, NS3, NS4A, NS4B, NS5A and the RNA-directed RNA polymerase embedded in an ER-derived membranous web. In terms of assembly, monomer. Homodimer; dimerization is required for RNA-binding. Interacts with the mature core protein. Interacts (via N-terminus) with non-structural protein 4A. Interacts with non-structural protein 4B. Interacts (via region D2) with RNA-directed RNA polymerase. Part of the viral assembly initiation complex composed of NS2, E1, E2, NS3, NS4A, NS5A and the mature core protein. Part of the replication complex composed of NS2, NS3, NS4A, NS4B, NS5A and the RNA-directed RNA polymerase embedded in an ER-derived membranous web. Interacts with host GRB2. Interacts with host BIN1. Interacts with host PIK3R1. Interacts with host SRCAP. Interacts with host FKBP8. Interacts (via C-terminus) with host VAPB (via MSP domain). Interacts with host EIF2AK2/PKR; this interaction leads to disruption of EIF2AK2 dimerization by NS5A and probably allows the virus to evade the innate immune response. Interacts (via N-terminus) with host PACSIN2 (via N-terminus); this interaction attenuates protein kinase C alpha-mediated phosphorylation of PACSIN2 by disrupting the interaction between PACSIN2 and PRKCA. Interacts (via N-terminus) with host SRC kinase (via SH2 domain). Interacts with most Src-family kinases. Interacts with host IFI27 and SKP2; promotes the ubiquitin-mediated proteasomal degradation of NS5A. Interacts with host GPS2. Interacts with host TNFRSF21; this interaction allows the modulation by the virus of JNK, p38 MAPK, STAT3, and Akt signaling pathways in a DR6-dependent manner. Interacts (via N-terminus) with host CIDEB (via N-terminus); this interaction seems to regulate the association of HCV particles with APOE. Interacts with host CHKA/Choline Kinase-alpha; CHKA bridges host PI4KA and NS5A and potentiates NS5A-stimulated PI4KA activity, which then facilitates the targeting of the ternary complex to the ER for viral replication. Interacts with host SPSB2 (via C-terminus); this interaction targets NS5A for ubiquitination and degradation. Interacts with host RAB18; this interaction may promote the association of NS5A and other replicase components with lipid droplets. Interacts (via region D2) with host PPIA/CYPA; the interaction stimulates RNA-binding ability of NS5A and is dependent on the peptidyl-prolyl cis-trans isomerase activity of PPIA/CYPA. Interacts with host TRIM14; this interaction induces the degradation of NS5A. As to quaternary structure, homooligomer. Interacts with non-structural protein 5A. Interacts with host VAPB. Interacts with host PRK2/PKN2. Interacts with host HNRNPA1 and SEPT6; these interactions facilitate viral replication. Part of the replication complex composed of NS2, NS3, NS4A, NS4B, NS5A and the RNA-directed RNA polymerase. Zn(2+) serves as cofactor. The cofactor is Mg(2+). Specific enzymatic cleavages in vivo yield mature proteins. The structural proteins, core, E1, E2 and p7 are produced by proteolytic processing by host signal peptidases. The core protein precursor is synthesized as a 23 kDa, which is retained in the ER membrane through the hydrophobic signal peptide. Cleavage by the signal peptidase releases the 21 kDa mature core protein. The cleavage of the core protein precursor occurs between aminoacids 176 and 188 but the exact cleavage site is not known. Some degraded forms of the core protein appear as well during the course of infection. The other proteins (p7, NS2, NS3, NS4A, NS4B, NS5A and NS5B) are cleaved by the viral proteases. Autoprocessing between NS2 and NS3 is mediated by the NS2 cysteine protease catalytic domain and regulated by the NS3 N-terminal domain. In terms of processing, phosphorylated by host PKC and PKA. Post-translationally, ubiquitinated; mediated by UBE3A and leading to core protein subsequent proteasomal degradation. Highly N-glycosylated. In terms of processing, palmitoylation is required for NS2/3 autoprocessing and E2 recruitment to membranes. Post-translationally, palmitoylated. This modification may play a role in its polymerization or in protein-protein interactions. Phosphorylated on serines in a basal form termed p56. p58 is a hyperphosphorylated form of p56. p56 and p58 coexist in the cell in roughly equivalent amounts. Hyperphosphorylation is dependent on the presence of NS4A. Host CSNK1A1/CKI-alpha or RPS6KB1 kinases may be responsible for NS5A phosphorylation. In terms of processing, tyrosine phosphorylation is essential for the interaction with host SRC. Post-translationally, the N-terminus is phosphorylated by host PRK2/PKN2.

It is found in the host endoplasmic reticulum membrane. Its subcellular location is the host mitochondrion membrane. It localises to the virion. The protein localises to the host cytoplasm. The protein resides in the host nucleus. It is found in the host lipid droplet. Its subcellular location is the virion membrane. It localises to the host mitochondrion. The protein localises to the host cell membrane. The protein resides in the host perinuclear region. It carries out the reaction Hydrolysis of four peptide bonds in the viral precursor polyprotein, commonly with Asp or Glu in the P6 position, Cys or Thr in P1 and Ser or Ala in P1'.. It catalyses the reaction a ribonucleoside 5'-triphosphate + H2O = a ribonucleoside 5'-diphosphate + phosphate + H(+). The enzyme catalyses ATP + H2O = ADP + phosphate + H(+). The catalysed reaction is RNA(n) + a ribonucleoside 5'-triphosphate = RNA(n+1) + diphosphate. With respect to regulation, inhibited by the antiviral drug hexamethylene amiloride. Inhibition by amantadine appears to be genotype-dependent. Also inhibited by long-alkyl-chain iminosugar derivatives. Its activity is regulated as follows. Activity is up-regulated by PRK2/PKN2-mediated phosphorylation. Packages viral RNA to form a viral nucleocapsid, and promotes virion budding. Participates in the viral particle production as a result of its interaction with the non-structural protein 5A. Binds RNA and may function as a RNA chaperone to induce the RNA structural rearrangements taking place during virus replication. Modulates viral translation initiation by interacting with viral IRES and 40S ribosomal subunit. Affects various cell signaling pathways, host immunity and lipid metabolism. Prevents the establishment of cellular antiviral state by blocking the interferon-alpha/beta (IFN-alpha/beta) and IFN-gamma signaling pathways and by blocking the formation of phosphorylated STAT1 and promoting ubiquitin-mediated proteasome-dependent degradation of STAT1. Activates STAT3 leading to cellular transformation. Regulates the activity of cellular genes, including c-myc and c-fos. May repress the promoter of p53, and sequester CREB3 and SP110 isoform 3/Sp110b in the cytoplasm. Represses cell cycle negative regulating factor CDKN1A, thereby interrupting an important check point of normal cell cycle regulation. Targets transcription factors involved in the regulation of inflammatory responses and in the immune response: suppresses TNF-induced NF-kappa-B activation, and activates AP-1. Binds to dendritic cells (DCs) via C1QR1, resulting in down-regulation of T-lymphocytes proliferation. Alters lipid metabolism by interacting with hepatocellular proteins involved in lipid accumulation and storage. Induces up-regulation of FAS promoter activity, and thereby contributes to the increased triglyceride accumulation in hepatocytes (steatosis). In terms of biological role, forms a heterodimer with envelope glycoprotein E2, which mediates virus attachment to the host cell, virion internalization through clathrin-dependent endocytosis and fusion with host membrane. Fusion with the host cell is most likely mediated by both E1 and E2, through conformational rearrangements of the heterodimer required for fusion rather than a classical class II fusion mechanism. E1/E2 heterodimer binds host apolipoproteins such as APOB and ApoE thereby forming a lipo-viro-particle (LVP). APOE associated to the LVP allows the initial virus attachment to cell surface receptors such as the heparan sulfate proteoglycans (HSPGs), syndecan-1 (SDC1), syndecan-1 (SDC2), the low-density lipoprotein receptor (LDLR) and scavenger receptor class B type I (SCARB1). The cholesterol transfer activity of SCARB1 allows E2 exposure and binding of E2 to SCARB1 and the tetraspanin CD81. E1/E2 heterodimer binding on CD81 activates the epithelial growth factor receptor (EGFR) signaling pathway. Diffusion of the complex E1-E2-EGFR-SCARB1-CD81 to the cell lateral membrane allows further interaction with Claudin 1 (CLDN1) and occludin (OCLN) to finally trigger HCV entry. Functionally, forms a heterodimer with envelope glycoprotein E1, which mediates virus attachment to the host cell, virion internalization through clathrin-dependent endocytosis and fusion with host membrane. Fusion with the host cell is most likely mediated by both E1 and E2, through conformational rearrangements of the heterodimer required for fusion rather than a classical class II fusion mechanism. The interaction between envelope glycoprotein E2 and host apolipoprotein E/APOE allows the proper assembly, maturation and infectivity of the viral particles. This interaction is probably promoted via the up-regulation of cellular autophagy by the virus. E1/E2 heterodimer binds host apolipoproteins such as APOB and APOE thereby forming a lipo-viro-particle (LVP). APOE associated to the LVP allows the initial virus attachment to cell surface receptors such as the heparan sulfate proteoglycans (HSPGs), syndecan-1 (SDC1), syndecan-1 (SDC2), the low-density lipoprotein receptor (LDLR) and scavenger receptor class B type I (SCARB1). The cholesterol transfer activity of SCARB1 allows E2 exposure and binding of E2 to SCARB1 and the tetraspanin CD81. E1/E2 heterodimer binding on CD81 activates the epithelial growth factor receptor (EGFR) signaling pathway. Diffusion of the complex E1-E2-EGFR-SCARB1-CD81 to the cell lateral membrane allows further interaction with Claudin 1 (CLDN1) and occludin (OCLN) to finally trigger HCV entry. Inhibits host EIF2AK2/PKR activation, preventing the establishment of an antiviral state. Viral ligand for CD209/DC-SIGN and CLEC4M/DC-SIGNR, which are respectively found on dendritic cells (DCs), and on liver sinusoidal endothelial cells and macrophage-like cells of lymph node sinuses. These interactions allow the capture of circulating HCV particles by these cells and subsequent facilitated transmission to permissive cells such as hepatocytes and lymphocyte subpopulations. The interaction between E2 and host amino acid transporter complex formed by SLC3A2 and SLC7A5/LAT1 may facilitate viral entry into host cell. Its function is as follows. Ion channel protein that acts as a viroporin and plays an essential role in the assembly, envelopment and secretion of viral particles. Regulates the host cell secretory pathway, which induces the intracellular retention of viral glycoproteins and favors assembly of viral particles. Creates a pore in acidic organelles and releases Ca(2+) and H(+) in the cytoplasm of infected cells, leading to a productive viral infection. High levels of cytoplasmic Ca(2+) may trigger membrane trafficking and transport of viral ER-associated proteins to viroplasms, sites of viral genome replication. This ionic imbalance induces the assembly of the inflammasome complex, which triggers the maturation of pro-IL-1beta into IL-1beta through the action of caspase-1. Targets also host mitochondria and induces mitochondrial depolarization. In addition of its role as a viroporin, acts as a lipid raft adhesion factor. Cysteine protease required for the proteolytic auto-cleavage between the non-structural proteins NS2 and NS3. The N-terminus of NS3 is required for the function of NS2 protease (active region NS2-3). Promotes the initiation of viral particle assembly by mediating the interaction between structural and non-structural proteins. In terms of biological role, displays three enzymatic activities: serine protease with a chymotrypsin-like fold, NTPase and RNA helicase. NS3 serine protease, in association with NS4A, is responsible for the cleavages of NS3-NS4A, NS4A-NS4B, NS4B-NS5A and NS5A-NS5B. The NS3/NS4A complex prevents phosphorylation of host IRF3, thus preventing the establishment of dsRNA induced antiviral state. The NS3/NS4A complex induces host amino acid transporter component SLC3A2, thus contributing to HCV propagation. NS3 RNA helicase binds to RNA and unwinds both dsDNA and dsRNA in the 3' to 5' direction, and likely resolves RNA complicated stable secondary structures in the template strand. Binds a single ATP and catalyzes the unzipping of a single base pair of dsRNA. Inhibits host antiviral proteins TBK1 and IRF3 thereby preventing the establishment of an antiviral state. Cleaves host MAVS/CARDIF thereby preventing the establishment of an antiviral state. Cleaves host TICAM1/TRIF, thereby disrupting TLR3 signaling and preventing the establishment of an antiviral state. Functionally, induces a specific membrane alteration that serves as a scaffold for the virus replication complex. This membrane alteration gives rise to the so-called ER-derived membranous web that contains the replication complex. NS4B self-interaction contributes to its function in membranous web formation. Promotes host TRIF protein degradation in a CASP8-dependent manner thereby inhibiting host TLR3-mediated interferon signaling. Disrupts the interaction between STING and TBK1 contributing to the inhibition of interferon signaling. Its function is as follows. Phosphorylated protein that is indispensable for viral replication and assembly. Both hypo- and hyperphosphorylated states are required for the viral life cycle. The hyperphosphorylated form of NS5A is an inhibitor of viral replication. Involved in RNA-binding and especially in binding to the viral genome. Zinc is essential for RNA-binding. Participates in the viral particle production as a result of its interaction with the mature viral core protein. Its interaction with host VAPB may target the viral replication complex to vesicles. Down-regulates viral IRES translation initiation. Mediates interferon resistance, presumably by interacting with and inhibiting host EIF2AK2/PKR. Prevents BIN1-induced apoptosis. Acts as a transcriptional activator of some host genes important for viral replication when localized in the nucleus. Via the interaction with host PACSIN2, modulates lipid droplet formation in order to promote virion assembly. Modulates TNFRSF21/DR6 signaling pathway for viral propagation. RNA-dependent RNA polymerase that performs primer-template recognition and RNA synthesis during viral replication. Initiates RNA transcription/replication at a flavin adenine dinucleotide (FAD), resulting in a 5'- FAD cap on viral RNAs. In this way, recognition of viral 5' RNA by host pattern recognition receptors can be bypassed, thereby evading activation of antiviral pathways. The polypeptide is Genome polyprotein (Hepatitis C virus genotype 6a (isolate 6a33) (HCV)).